Here is a 178-residue protein sequence, read N- to C-terminus: Cyclin-dependent kinase inhibitor 1B (178 aa).

The segment covering 1-11 (MSNVRVSNGSP) has biased composition (polar residues). The interval 1–31 (MSNVRVSNGSPSLERMDARQAEYPKPSACRN) is disordered. Residue serine 10 is modified to Phosphoserine; by UHMK1. The interval 51–91 (DMEEASQRKWNFDFQNHKPLEGKYEWQEVEKGSLPEFYYRP) is interaction with CDK2. The residue at position 74 (tyrosine 74) is a Phosphotyrosine; by SRC. The tract at residues 87–178 (FYYRPPRPPK…RTEENVSDGS (92 aa)) is disordered. Tyrosine 88 carries the phosphotyrosine; by ABL, LYN, SRC and JAK2 modification. Tyrosine 89 carries the phosphotyrosine modification. Polar residues predominate over residues 104–113 (QESQDVSGTR). Positions 126-137 (EDTHLVDQKTDT) are enriched in basic and acidic residues. The Nuclear localization signal motif lies at 153–169 (KRPATDDSSPQNKRANR). At threonine 157 the chain carries Phosphothreonine; by CaMK1, PKB/AKT1, RPS6KA1, RPS6KA3 and PIM1. Threonine 170 is subject to Phosphothreonine.

Belongs to the CDI family. As to quaternary structure, forms a ternary complex composed of CCNE1, CDK2 and CDKN1B. Interacts directly with CCNE1; the interaction is inhibited by CDK2-dependent phosphorylation. Interacts with COPS5, subunit of the COP9 signalosome complex; the interaction leads to CDKN1B degradation. Interacts with NUP50; the interaction leads to nuclear import and degradation of phosphorylated CDKN1B. Interacts with CCND1 and SNX6. Interacts (Thr-198-phosphorylated form) with 14-3-3 proteins, binds strongly YWHAQ, weakly YWHAE and YWHAH, but not YWHAB nor YWHAZ; the interaction with YWHAQ results in translocation to the cytoplasm. Interacts with AKT1 and LYN; the interactions lead to cytoplasmic mislocation, phosphorylation of CDKN1B and inhibition of cell cycle arrest. Forms a ternary complex with CCNA2 and CDK2; CDKN1B inhibits the kinase activity of CDK2 through conformational rearrangements. Interacts (unphosphorylated form) with CDK2. Forms a complex with CDK2 and SPDYA, but does not directly interact with SPDYA. Forms a ternary complex composed of cyclin D, CDK4 and CDKN1B. Interacts (phosphorylated on Tyr-88 and Tyr-89) with CDK4; the interaction is required for cyclin D and CDK4 complex assembly, induces nuclear translocation and activates the CDK4 kinase activity. Interacts with GRB2. Interacts with PIM1. Identified in a complex with SKP1, SKP2 and CKS1B. Interacts with UHMK1; the interaction leads to cytoplasmic mislocation, phosphorylation of CDKN1B and inhibition of cell cycle arrest. Also interacts with CDK1. Dephosphorylated by PPM1H, leading to CDKN1B stability. Phosphorylated; phosphorylation occurs on serine, threonine and tyrosine residues. Phosphorylation on Ser-10 is the major site of phosphorylation in resting cells, takes place at the G(0)-G(1) phase and leads to protein stability. Phosphorylation on other sites is greatly enhanced by mitogens, growth factors, MYC and in certain cancer cell lines. The phosphorylated form found in the cytoplasm is inactivate. Phosphorylation on Tyr-88 has no effect on binding CDK complexes. Post-translationally, ubiquitinated; in the cytoplasm by the KPC complex (composed of RNF123/KPC1 and UBAC1/KPC2) and, in the nucleus, by SCF(SKP2). The latter requires prior phosphorylation on Thr-187. Ubiquitinated; by a TRIM21-containing SCF(SKP2)-like complex; leads to its degradation. In terms of processing, subject to degradation in the lysosome. Interaction with SNX6 promotes lysosomal degradation.

It localises to the nucleus. Its subcellular location is the cytoplasm. The protein localises to the endosome. Important regulator of cell cycle progression. Inhibits the kinase activity of CDK2 bound to cyclin A, but has little inhibitory activity on CDK2 bound to SPDYA. Involved in G1 arrest. Potent inhibitor of cyclin E- and cyclin A-CDK2 complexes. Forms a complex with cyclin type D-CDK4 complexes and is involved in the assembly, stability, and modulation of CCND1-CDK4 complex activation. Acts either as an inhibitor or an activator of cyclin type D-CDK4 complexes depending on its phosphorylation state and/or stoichometry. The protein is Cyclin-dependent kinase inhibitor 1B (CDKN1B) of Neovison vison (American mink).